The following is a 194-amino-acid chain: HTH-type transcriptional regulator BetI (194 aa).

An HTH tetR-type domain is found at 8–68; that stretch reads EIRRAQLIDA…ATMRHVLRDL (61 aa). Residues 31-50 constitute a DNA-binding region (H-T-H motif); the sequence is TLASVAQRANISTGIVSHYF.

Its pathway is amine and polyamine biosynthesis; betaine biosynthesis via choline pathway [regulation]. Its function is as follows. Repressor involved in the biosynthesis of the osmoprotectant glycine betaine. It represses transcription of the choline transporter BetT and the genes of BetAB involved in the synthesis of glycine betaine. In Burkholderia cenocepacia (strain HI2424), this protein is HTH-type transcriptional regulator BetI.